The sequence spans 497 residues: UDP-N-acetylmuramoyl-L-alanyl-D-glutamate--2,6-diaminopimelate ligase (497 aa).

Serine 33 serves as a coordination point for UDP-N-acetyl-alpha-D-muramoyl-L-alanyl-D-glutamate. An ATP-binding site is contributed by 119-125; sequence GTNGKTT. UDP-N-acetyl-alpha-D-muramoyl-L-alanyl-D-glutamate is bound by residues 161-162, serine 188, glutamine 194, and arginine 196; that span reads TT. Residue lysine 228 is modified to N6-carboxylysine. Meso-2,6-diaminopimelate is bound by residues arginine 390, 414 to 417, glycine 465, and glutamate 469; that span reads DNPR. The short motif at 414–417 is the Meso-diaminopimelate recognition motif element; sequence DNPR.

The protein belongs to the MurCDEF family. MurE subfamily. Mg(2+) serves as cofactor. Carboxylation is probably crucial for Mg(2+) binding and, consequently, for the gamma-phosphate positioning of ATP.

It localises to the cytoplasm. The enzyme catalyses UDP-N-acetyl-alpha-D-muramoyl-L-alanyl-D-glutamate + meso-2,6-diaminopimelate + ATP = UDP-N-acetyl-alpha-D-muramoyl-L-alanyl-gamma-D-glutamyl-meso-2,6-diaminopimelate + ADP + phosphate + H(+). It functions in the pathway cell wall biogenesis; peptidoglycan biosynthesis. Its function is as follows. Catalyzes the addition of meso-diaminopimelic acid to the nucleotide precursor UDP-N-acetylmuramoyl-L-alanyl-D-glutamate (UMAG) in the biosynthesis of bacterial cell-wall peptidoglycan. The protein is UDP-N-acetylmuramoyl-L-alanyl-D-glutamate--2,6-diaminopimelate ligase of Synechococcus elongatus (strain ATCC 33912 / PCC 7942 / FACHB-805) (Anacystis nidulans R2).